A 216-amino-acid polypeptide reads, in one-letter code: Neural cell adhesion molecule L1.2 (216 aa).

Residues 1–64 (EFFIHYLRKD…QTAGARVMEV (64 aa)) form the Fibronectin type-III domain. Residues 1-73 (EFFIHYLRKD…VKSGFVTESW (73 aa)) lie on the Extracellular side of the membrane. Residues Asn22 and Asn46 are each glycosylated (N-linked (GlcNAc...) asparagine). Residues 74–94 (FIGLISALVLLLLVLLILCFI) traverse the membrane as a helical segment. The Cytoplasmic portion of the chain corresponds to 95 to 216 (KRSKGGKYSV…GLPNSAALLD (122 aa)). 2 disordered regions span residues 127–149 (YRSLESDNEEKRTASQPSLCEDS) and 173–216 (DESL…ALLD). The segment covering 128–139 (RSLESDNEEKRT) has biased composition (basic and acidic residues).

It belongs to the immunoglobulin superfamily. L1/neurofascin/NgCAM family. As to expression, expressed in many postmitotic neurons in 16-36 hours embryos. Little or no expression in the olfactory placode, the anterior lateral line/acoustic ganglia complex, the posterior lateral line ganglion, late-developing hindbrain neurons and some Rohon-Beard cells in the spinal cord.

It is found in the cell membrane. The protein resides in the cell projection. The protein localises to the growth cone. Its function is as follows. Cell adhesion molecule with an important role in the development of the nervous system. Involved in neuron-neuron adhesion, neurite fasciculation, outgrowth of neurites, etc. Binds to axonin on neurons. The protein is Neural cell adhesion molecule L1.2 (nadl1.2) of Danio rerio (Zebrafish).